A 348-amino-acid chain; its full sequence is Fructose-1,6-bisphosphatase class 1 (348 aa).

Positions 92, 111, 113, and 114 each coordinate Mg(2+). Residues 114-117 (DGSS) and Asn-204 contribute to the substrate site. Residue Glu-276 participates in Mg(2+) binding.

It belongs to the FBPase class 1 family. In terms of assembly, homotetramer. Mg(2+) is required as a cofactor.

The protein resides in the cytoplasm. It carries out the reaction beta-D-fructose 1,6-bisphosphate + H2O = beta-D-fructose 6-phosphate + phosphate. It participates in carbohydrate biosynthesis; gluconeogenesis. The polypeptide is Fructose-1,6-bisphosphatase class 1 (Methylorubrum extorquens (strain PA1) (Methylobacterium extorquens)).